A 309-amino-acid polypeptide reads, in one-letter code: MKKEEKKENKKREQNQISSKKWNEWLAGLIDGAGKFTLSKSGYANLDILLELRDEKCHIELKQRFGGEIKRKETTLIRYRVHRLYGIRQLIACVNGHIRHPLRKIEFKEICMHYNVEYKEPETLTFANGWLSGYFDAVGLIEFSTEQDQLYLAFRHKKNTMLNELEIQKCLGVNLTCEQNGCSCESVTLYKINKKTVLSLYKYFKKYRLRSSIKTTQILLIPQFYEIQNETKEINDMQVKQKLWKQFFKKWYVDEMVKYESVKLANYYKSKTSPEKRVKKLIKLKFHRNERIRKRAERLELQKEKEKKA.

Belongs to the LAGLIDADG endonuclease family.

The protein resides in the mitochondrion. Its function is as follows. Mitochondrial DNA endonuclease involved in intron homing. Cleaves only one strand of intronless DNA sequence at the site which coincides with the I-SceII cleavage recognition site. This chain is Intron-encoded DNA endonuclease ai2a (ai2a), found in Dictyostelium discoideum (Social amoeba).